Consider the following 338-residue polypeptide: Glycerol-3-phosphate dehydrogenase [NAD(P)+] (338 aa).

The NADPH site is built by S14, Y15, H35, and K109. Residues K109, G138, and T140 each coordinate sn-glycerol 3-phosphate. A142 is a binding site for NADPH. Sn-glycerol 3-phosphate-binding residues include K194, D247, S257, R258, and N259. The active-site Proton acceptor is K194. An NADPH-binding site is contributed by R258. Positions 282 and 284 each coordinate NADPH.

This sequence belongs to the NAD-dependent glycerol-3-phosphate dehydrogenase family.

It localises to the cytoplasm. The catalysed reaction is sn-glycerol 3-phosphate + NAD(+) = dihydroxyacetone phosphate + NADH + H(+). The enzyme catalyses sn-glycerol 3-phosphate + NADP(+) = dihydroxyacetone phosphate + NADPH + H(+). The protein operates within membrane lipid metabolism; glycerophospholipid metabolism. Catalyzes the reduction of the glycolytic intermediate dihydroxyacetone phosphate (DHAP) to sn-glycerol 3-phosphate (G3P), the key precursor for phospholipid synthesis. This chain is Glycerol-3-phosphate dehydrogenase [NAD(P)+], found in Shewanella baltica (strain OS195).